The primary structure comprises 213 residues: Germin-like protein 8-14 (213 aa).

An N-terminal signal peptide occupies residues 1 to 23; sequence MAKAVMMLPVLLSFLLLPFSSMA. An intrachain disulfide couples Cys-29 to Cys-44. The region spanning 56–203 is the Cupin type-1 domain; that stretch reads HGLAAAGNTS…VTFLDDAQVK (148 aa). A glycan (N-linked (GlcNAc...) asparagine) is linked at Asn-63. Mn(2+) contacts are provided by His-104, His-106, Glu-111, and His-151.

The protein belongs to the germin family. Oligomer (believed to be a pentamer but probably hexamer). Post-translationally, phosphorylated on threonine residue.

The protein localises to the secreted. It is found in the extracellular space. The protein resides in the apoplast. May play a role in plant defense. Probably has no oxalate oxidase activity even if the active site is conserved. The chain is Germin-like protein 8-14 (GER5) from Oryza sativa subsp. japonica (Rice).